Consider the following 442-residue polypeptide: Citrate synthase (442 aa).

Catalysis depends on residues His274, His320, and Asp375.

The protein belongs to the citrate synthase family.

The enzyme catalyses oxaloacetate + acetyl-CoA + H2O = citrate + CoA + H(+). It functions in the pathway carbohydrate metabolism; tricarboxylic acid cycle; isocitrate from oxaloacetate: step 1/2. Catalyzes both citrate generation and citrate cleavage. Part of a reversible tricarboxylic acid (TCA) cycle that can fix carbon dioxide autotrophically and may represent an ancestral mode of the conventional reductive TCA (rTCA) cycle. The direction is controlled by the available carbon source(s). The polypeptide is Citrate synthase (Thermosulfidibacter takaii (strain DSM 17441 / JCM 13301 / NBRC 103674 / ABI70S6)).